We begin with the raw amino-acid sequence, 449 residues long: Packaging protein 1 (449 aa).

Positions M1–K10 are enriched in basic residues. The tract at residues M1–P64 is disordered. A compositionally biased stretch (basic and acidic residues) spans K11 to A25. Positions S35 to I59 are enriched in polar residues. G168–S175 is a binding site for ATP. Positions T437–K449 are DNA-binding.

It belongs to the adenoviridae packaging protein 1 family. Homodimer. Part of a genome packaging complex composed of packaging proteins 1, 2 and 3; this complex specifically binds to the packaging sequence on the left end of viral genomic DNA and performs packaging of the viral genome. Interacts with protein 33K.

The protein resides in the virion. Its subcellular location is the host nucleus. The protein localises to the host nucleoplasm. It localises to the host nucleolus. In terms of biological role, component of the packaging machinery which encapsidates the viral DNA into preformed capsids and transcriptional activator of the viral major late promoter (MLP). Binds, along with packaging proteins 2 and 3, to the specific packaging sequence on the left end of viral genomic DNA and displays ATPase activity thereby providing the power stroke of the packaging machinery. The activity of packaging protein IVa2 is stimulated by protein 33K which acts as a terminase. May be the protein that pumps DNA into the capsid powered by ATP hydrolysis. Specifically binds to the 5'-CG-3' nucleotides of the repeats making up the packaging sequence. Component of the DEF-A and DEF-B transcription factors that bind downstream elements of the major late promoter (MLP), and stimulate transcription from the MLP after initiation of viral DNA replication. DEF-A is a heterodimer packaging proteins 1 and 2 and DEF-B is a homodimer of packaging protein 1. In Mus musculus (Mouse), this protein is Packaging protein 1.